The sequence spans 926 residues: Protein translocase subunit SecA (926 aa).

ATP contacts are provided by residues Gln-87, 105–109, and Asp-512; that span reads GEGKT. The Zn(2+) site is built by Cys-911, Cys-913, Cys-922, and His-923.

This sequence belongs to the SecA family. As to quaternary structure, monomer and homodimer. Part of the essential Sec protein translocation apparatus which comprises SecA, SecYEG and auxiliary proteins SecDF-YajC and YidC. Requires Zn(2+) as cofactor.

Its subcellular location is the cell inner membrane. It is found in the cytoplasm. It carries out the reaction ATP + H2O + cellular proteinSide 1 = ADP + phosphate + cellular proteinSide 2.. Part of the Sec protein translocase complex. Interacts with the SecYEG preprotein conducting channel. Has a central role in coupling the hydrolysis of ATP to the transfer of proteins into and across the cell membrane, serving both as a receptor for the preprotein-SecB complex and as an ATP-driven molecular motor driving the stepwise translocation of polypeptide chains across the membrane. This Psychrobacter cryohalolentis (strain ATCC BAA-1226 / DSM 17306 / VKM B-2378 / K5) protein is Protein translocase subunit SecA.